We begin with the raw amino-acid sequence, 1020 residues long: Retinoblastoma-related protein (1020 aa).

Polar residues-rich tracts occupy residues 382-391 (SPTKTITSPL) and 398-409 (ASHTNGILGSTN). The disordered stretch occupies residues 382–409 (SPTKTITSPLSPHRSPASHTNGILGSTN). Positions 415–616 (TPVSTAMTTA…EKGSSMYNSL (202 aa)) are domain A. The interval 415–869 (TPVSTAMTTA…NEIFIPAAKP (455 aa)) is pocket. The interval 617–737 (TVARPSLSAE…PGGGGETCAE (121 aa)) is spacer. The tract at residues 738 to 869 (TGINIFFSKI…NEIFIPAAKP (132 aa)) is domain B.

Belongs to the retinoblastoma protein (RB) family.

Its subcellular location is the nucleus. Functionally, regulator of biological processes that recruits a histone deacetylase to control gene transcription. May play a role in the entry into mitosis, negatively regulating the cell proliferation. Formation of stable complexes with geminiviridae replication-associated proteins may create a cellular environment which favors viral DNA replication. This is Retinoblastoma-related protein (RBR) from Ricinus communis (Castor bean).